A 288-amino-acid chain; its full sequence is Undecaprenyl-diphosphatase (288 aa).

8 helical membrane passes run 25-45 (GITE…NEFL), 53-73 (FIDM…MVIY), 93-113 (WKLW…GLLL), 121-141 (LSNF…FIWI), 171-191 (VLSI…GIIV), 196-216 (SVAA…YSGL), 231-251 (GQAA…LFVI), and 263-283 (FTVF…YGAV).

The protein belongs to the UppP family.

Its subcellular location is the cell membrane. The catalysed reaction is di-trans,octa-cis-undecaprenyl diphosphate + H2O = di-trans,octa-cis-undecaprenyl phosphate + phosphate + H(+). In terms of biological role, catalyzes the dephosphorylation of undecaprenyl diphosphate (UPP). Confers resistance to bacitracin. The sequence is that of Undecaprenyl-diphosphatase from Streptococcus thermophilus (strain ATCC BAA-250 / LMG 18311).